The primary structure comprises 135 residues: Cytochrome c oxidase subunit 2 (135 aa).

Cu cation-binding residues include His81, Cys116, Cys120, and His124.

This sequence belongs to the cytochrome c oxidase subunit 2 family.

Its subcellular location is the cell membrane. The enzyme catalyses 4 Fe(II)-[cytochrome c] + O2 + 8 H(+)(in) = 4 Fe(III)-[cytochrome c] + 2 H2O + 4 H(+)(out). Functionally, subunits I and II form the functional core of the enzyme complex. Electrons originating in cytochrome c are transferred via heme a and Cu(A) to the binuclear center formed by heme a3 and Cu(B). The chain is Cytochrome c oxidase subunit 2 (cbaB) from Thermus thermophilus.